Here is a 194-residue protein sequence, read N- to C-terminus: Peptidyl-tRNA hydrolase (194 aa).

Y16 contributes to the tRNA binding site. H21 acts as the Proton acceptor in catalysis. Residues F66, N68, and N114 each contribute to the tRNA site.

Belongs to the PTH family. As to quaternary structure, monomer.

Its subcellular location is the cytoplasm. The enzyme catalyses an N-acyl-L-alpha-aminoacyl-tRNA + H2O = an N-acyl-L-amino acid + a tRNA + H(+). Its function is as follows. Hydrolyzes ribosome-free peptidyl-tRNAs (with 1 or more amino acids incorporated), which drop off the ribosome during protein synthesis, or as a result of ribosome stalling. Catalyzes the release of premature peptidyl moieties from peptidyl-tRNA molecules trapped in stalled 50S ribosomal subunits, and thus maintains levels of free tRNAs and 50S ribosomes. The protein is Peptidyl-tRNA hydrolase of Geobacter metallireducens (strain ATCC 53774 / DSM 7210 / GS-15).